We begin with the raw amino-acid sequence, 273 residues long: 2,3,4,5-tetrahydropyridine-2,6-dicarboxylate N-succinyltransferase (273 aa).

Residues arginine 104 and aspartate 141 each contribute to the substrate site.

Belongs to the transferase hexapeptide repeat family. Homotrimer.

Its subcellular location is the cytoplasm. The catalysed reaction is (S)-2,3,4,5-tetrahydrodipicolinate + succinyl-CoA + H2O = (S)-2-succinylamino-6-oxoheptanedioate + CoA. It participates in amino-acid biosynthesis; L-lysine biosynthesis via DAP pathway; LL-2,6-diaminopimelate from (S)-tetrahydrodipicolinate (succinylase route): step 1/3. This chain is 2,3,4,5-tetrahydropyridine-2,6-dicarboxylate N-succinyltransferase, found in Psychrobacter arcticus (strain DSM 17307 / VKM B-2377 / 273-4).